The following is a 123-amino-acid chain: Small ribosomal subunit protein uS12 (123 aa).

Position 89 is a 3-methylthioaspartic acid (aspartate 89).

The protein belongs to the universal ribosomal protein uS12 family. In terms of assembly, part of the 30S ribosomal subunit. Contacts proteins S8 and S17. May interact with IF1 in the 30S initiation complex.

In terms of biological role, with S4 and S5 plays an important role in translational accuracy. Interacts with and stabilizes bases of the 16S rRNA that are involved in tRNA selection in the A site and with the mRNA backbone. Located at the interface of the 30S and 50S subunits, it traverses the body of the 30S subunit contacting proteins on the other side and probably holding the rRNA structure together. The combined cluster of proteins S8, S12 and S17 appears to hold together the shoulder and platform of the 30S subunit. The sequence is that of Small ribosomal subunit protein uS12 from Myxococcus xanthus.